Consider the following 529-residue polypeptide: MLMLLVRGTHYESLRSKVVLPTPLGGRGTEALVSECPSPDTGIRWRQSDEALRVNVGGVRRLLSARALARFPGTRLGRLQAAASEEQARRLCDDYDAAAREFYFDRHPGFFLGLLHFYRTGHLHVLDELCVFAFGQEADYWGLGENALAACCRARYLERRLTQPRAWDEDSDTPSSVDPCPDEISDVQRELARYGAARCGRLRRRLWLTMENPGYSLPSKLFSCVSISVVLASIAAMCIHSLPEYQAREAAAAVAAVAAGRSPEGVRDDPVLRRLEYFCIAWFSFEVSSRLLLAPSTRNFFCHPLNLIDIVSVLPFYLTLLAGVALGDQGGTGGKELGHLGKVVQVFRLMRIFRVLKLARHSTGLRSLGATLKHSYREVGILLLYLAVGVSVFSGVAYTAEKEEDVGFNTIPACWWWGTVSMTTVGYGDVVPVTVAGKLAASGCILGGILVVALPITIIFNKFSHFYRRQKALEAAVRNSNHQEFEDLLSSVDGVSEASLETSRETSQEGRSADLETQAPSEPPHPQMY.

Residues Met-1–Leu-217 are Cytoplasmic-facing. The helical transmembrane segment at Pro-218 to Ile-239 threads the bilayer. The Extracellular segment spans residues His-240–Pro-270. A helical transmembrane segment spans residues Val-271–Leu-293. Over Ala-294–Pro-304 the chain is Cytoplasmic. The helical transmembrane segment at Leu-305 to Ala-322 threads the bilayer. The Extracellular segment spans residues Gly-323–Leu-340. The helical; Voltage-sensor transmembrane segment at Gly-341–His-361 threads the bilayer. Topologically, residues Ser-362–Tyr-376 are cytoplasmic. Residues Arg-377–Tyr-398 traverse the membrane as a helical segment. Residues Thr-399–Ile-411 lie on the Extracellular side of the membrane. The segment at residues Pro-412–Thr-423 is an intramembrane region (helical). A Selectivity filter motif is present at residues Thr-424 to Asp-429. Residues Thr-424–Val-431 lie within the membrane without spanning it. Residues Pro-432 to Lys-438 are Extracellular-facing. A helical transmembrane segment spans residues Leu-439 to Tyr-467. The Cytoplasmic portion of the chain corresponds to Arg-468–Tyr-529. A disordered region spans residues Gly-494–Tyr-529. Residues Thr-502–Asp-514 show a composition bias toward basic and acidic residues.

This sequence belongs to the potassium channel family. S (TC 1.A.1.2) subfamily. Kv9.1/KCNS1 sub-subfamily. In terms of assembly, heterotetramer with KCNB1. Heterotetramer with KCNB2. Does not form homomultimers.

It localises to the cell membrane. Its function is as follows. Potassium channel regulatory subunit that modulate the delayed rectifier voltage-gated potassium channel activity of KCNB1 and KCNB2 by altering their kinetics, expression levels, and shifting the half-inactivation potential to more polarized values. While it does not form functional channels on its own, it can form functional heterotetrameric channels with KCNB1 and KCNB2. Each regulatory subunit has unique regulatory properties that can lead to extensive inhibition, significant changes in kinetics, and/or substantial shifts in the voltage dependencies of the inactivation process. This chain is Delayed-rectifier potassium channel regulatory subunit KCNS1, found in Macaca mulatta (Rhesus macaque).